Here is a 558-residue protein sequence, read N- to C-terminus: Zeta-carotene desaturase, chloroplastic/chromoplastic (558 aa).

The N-terminal 27 residues, 1–27, are a transit peptide targeting the chloroplast and chromoplast; sequence MASSVVFAATGSLSVPPLKSRRFYVNS.

The protein belongs to the zeta carotene desaturase family. Requires decylplastoquinone as cofactor. The cofactor is 6-decylubiquinone. Highly expressed in leaves. Expressed at low levels in flowers and siliques.

The protein localises to the plastid. It localises to the chloroplast. The protein resides in the chromoplast. The enzyme catalyses 9,9'-di-cis-zeta-carotene + 2 a quinone = 7,7',9,9'-tetra-cis-lycopene + 2 a quinol. It participates in carotenoid biosynthesis; lycopene biosynthesis. Plays a crucial role in plant growth and development. Is essential for the biosynthesis of carotenoids. Carotenoids are involved in different physiological processes, including coloration, photoprotection, biosynthesis of abscisic acid (ABA) and chloroplast biogenesis. Catalyzes the conversion of zeta-carotene to lycopene via the intermediary of neurosporene. It carries out two consecutive desaturations (introduction of double bonds) at positions C-7 and C-7'. Shows stereoselectivity toward trans C15-C15'zeta-carotene double bond. The zeta-carotene produced by the phytoene desaturase PDS has a C15-C15' double bond in the cis configuration and it requires isomerization before being recognized as substrate by ZDS. The main product is 7,9,7',9'-tetra-cis-lycopene (pro-lycopene). The chain is Zeta-carotene desaturase, chloroplastic/chromoplastic from Arabidopsis thaliana (Mouse-ear cress).